Reading from the N-terminus, the 122-residue chain is Large ribosomal subunit protein bL19c (122 aa).

This sequence belongs to the bacterial ribosomal protein bL19 family.

It localises to the plastid. It is found in the chloroplast. The sequence is that of Large ribosomal subunit protein bL19c (rpl19) from Rhodomonas salina (Cryptomonas salina).